Reading from the N-terminus, the 146-residue chain is D-aminoacyl-tRNA deacylase (146 aa).

Positions 137–138 (GP) match the Gly-cisPro motif, important for rejection of L-amino acids motif.

It belongs to the DTD family. Homodimer.

The protein localises to the cytoplasm. It carries out the reaction glycyl-tRNA(Ala) + H2O = tRNA(Ala) + glycine + H(+). It catalyses the reaction a D-aminoacyl-tRNA + H2O = a tRNA + a D-alpha-amino acid + H(+). Its function is as follows. An aminoacyl-tRNA editing enzyme that deacylates mischarged D-aminoacyl-tRNAs. Also deacylates mischarged glycyl-tRNA(Ala), protecting cells against glycine mischarging by AlaRS. Acts via tRNA-based rather than protein-based catalysis; rejects L-amino acids rather than detecting D-amino acids in the active site. By recycling D-aminoacyl-tRNA to D-amino acids and free tRNA molecules, this enzyme counteracts the toxicity associated with the formation of D-aminoacyl-tRNA entities in vivo and helps enforce protein L-homochirality. The protein is D-aminoacyl-tRNA deacylase of Psychrobacter sp. (strain PRwf-1).